The following is a 415-amino-acid chain: Succinate--CoA ligase [GDP-forming] subunit beta, mitochondrial (415 aa).

The transit peptide at 1 to 19 (MLRAAGNLSKSMMKSQRRF) directs the protein to the mitochondrion. An ATP-grasp domain is found at 28-258 (KEILEKHGCS…SAAYRQKEIF (231 aa)). Residues Gln39, 72-74 (GRG), and Val130 contribute to the GTP site. Asn227 and Asp241 together coordinate Mg(2+). Substrate contacts are provided by residues Asn292 and 349-351 (GIV).

It belongs to the succinate/malate CoA ligase beta subunit family. GTP-specific subunit beta subfamily. In terms of assembly, heterodimer of an alpha and a beta subunit. The beta subunit determines specificity for GTP. Mg(2+) serves as cofactor.

The protein resides in the mitochondrion. It carries out the reaction GTP + succinate + CoA = succinyl-CoA + GDP + phosphate. It functions in the pathway carbohydrate metabolism; tricarboxylic acid cycle; succinate from succinyl-CoA (ligase route): step 1/1. Its function is as follows. GTP-specific succinyl-CoA synthetase functions in the citric acid cycle (TCA), coupling the hydrolysis of succinyl-CoA to the synthesis of GTP and thus represents the only step of substrate-level phosphorylation in the TCA. The beta subunit provides nucleotide specificity of the enzyme and binds the substrate succinate, while the binding sites for coenzyme A and phosphate are found in the alpha subunit. The protein is Succinate--CoA ligase [GDP-forming] subunit beta, mitochondrial of Caenorhabditis elegans.